Here is a 212-residue protein sequence, read N- to C-terminus: MNDSSLSPEVTADLEYGLDILELDRVYVVPLLAYLTLLIRWNRTYNLTAIRDPREMVVRHLLDSLAIQRYVTVGRLADLGSGPGLPGIPLAISCPSLQVTLVESNGKKARFLREVVRQLGLSNVGVSEVRAEALDEALTYEHLTARALDTLNGIVTVGGHLLKSEGTLLAMKGAYPHEEIAMLPPHWVVEAVHPLQVPKLTGKRHLVIVRKR.

S-adenosyl-L-methionine contacts are provided by residues Gly80, Leu85, 131-132 (AE), and Arg146.

Belongs to the methyltransferase superfamily. RNA methyltransferase RsmG family.

The protein resides in the cytoplasm. The catalysed reaction is guanosine(527) in 16S rRNA + S-adenosyl-L-methionine = N(7)-methylguanosine(527) in 16S rRNA + S-adenosyl-L-homocysteine. Specifically methylates the N7 position of guanine in position 527 of 16S rRNA. The polypeptide is Ribosomal RNA small subunit methyltransferase G (Xylella fastidiosa (strain 9a5c)).